Consider the following 312-residue polypeptide: Dihydroorotate dehydrogenase B (NAD(+)), catalytic subunit (312 aa).

Residues serine 23 and 47–48 (KA) contribute to the FMN site. Residues lysine 47 and 71–75 (NAIGL) contribute to the substrate site. FMN-binding residues include asparagine 102 and asparagine 130. Asparagine 130 contacts substrate. Cysteine 133 serves as the catalytic Nucleophile. FMN-binding residues include lysine 168 and isoleucine 194. 195–196 (NT) contributes to the substrate binding site. FMN is bound by residues glycine 220, 246-247 (GG), and 268-269 (GT).

Belongs to the dihydroorotate dehydrogenase family. Type 1 subfamily. Heterotetramer of 2 PyrK and 2 PyrD type B subunits. FMN serves as cofactor.

It localises to the cytoplasm. The catalysed reaction is (S)-dihydroorotate + NAD(+) = orotate + NADH + H(+). The protein operates within pyrimidine metabolism; UMP biosynthesis via de novo pathway; orotate from (S)-dihydroorotate (NAD(+) route): step 1/1. Its function is as follows. Catalyzes the conversion of dihydroorotate to orotate with NAD(+) as electron acceptor. This is Dihydroorotate dehydrogenase B (NAD(+)), catalytic subunit (pyrDB) from Enterococcus faecalis (strain ATCC 700802 / V583).